We begin with the raw amino-acid sequence, 393 residues long: Formate-dependent phosphoribosylglycinamide formyltransferase (393 aa).

Residues 22–23 and E82 each bind N(1)-(5-phospho-beta-D-ribosyl)glycinamide; that span reads EL. ATP-binding positions include R114, K155, 160–165, 195–198, and E203; these read SSGHGQ and EGFV. The ATP-grasp domain occupies 119 to 308; that stretch reads RLAAEELGLP…QFALHARAVL (190 aa). Mg(2+)-binding residues include E267 and E279. N(1)-(5-phospho-beta-D-ribosyl)glycinamide-binding positions include D286, K356, and 363 to 364; that span reads RR.

This sequence belongs to the PurK/PurT family. Homodimer.

It carries out the reaction N(1)-(5-phospho-beta-D-ribosyl)glycinamide + formate + ATP = N(2)-formyl-N(1)-(5-phospho-beta-D-ribosyl)glycinamide + ADP + phosphate + H(+). Its pathway is purine metabolism; IMP biosynthesis via de novo pathway; N(2)-formyl-N(1)-(5-phospho-D-ribosyl)glycinamide from N(1)-(5-phospho-D-ribosyl)glycinamide (formate route): step 1/1. Involved in the de novo purine biosynthesis. Catalyzes the transfer of formate to 5-phospho-ribosyl-glycinamide (GAR), producing 5-phospho-ribosyl-N-formylglycinamide (FGAR). Formate is provided by PurU via hydrolysis of 10-formyl-tetrahydrofolate. The polypeptide is Formate-dependent phosphoribosylglycinamide formyltransferase (Parabacteroides distasonis (strain ATCC 8503 / DSM 20701 / CIP 104284 / JCM 5825 / NCTC 11152)).